A 357-amino-acid polypeptide reads, in one-letter code: Thiamine thiazole synthase 1, chloroplastic (357 aa).

A chloroplast-targeting transit peptide spans methionine 1 to serine 51. Substrate is bound by residues alanine 103, glutamate 123–glutamine 124, glycine 131, and alanine 196. Cysteine 225 carries the 2,3-didehydroalanine (Cys) modification. Residues aspartate 227, histidine 242, methionine 294, and arginine 304–glycine 306 each bind substrate.

The protein belongs to the THI4 family. In terms of assembly, homooctamer. It depends on Fe cation as a cofactor. During the catalytic reaction, a sulfide is transferred from Cys-225 to a reaction intermediate, generating a dehydroalanine residue.

The protein resides in the plastid. It is found in the chloroplast. The enzyme catalyses [ADP-thiazole synthase]-L-cysteine + glycine + NAD(+) = [ADP-thiazole synthase]-dehydroalanine + ADP-5-ethyl-4-methylthiazole-2-carboxylate + nicotinamide + 3 H2O + 2 H(+). In terms of biological role, involved in biosynthesis of the thiamine precursor thiazole. Catalyzes the conversion of NAD and glycine to adenosine diphosphate 5-(2-hydroxyethyl)-4-methylthiazole-2-carboxylic acid (ADT), an adenylated thiazole intermediate. The reaction includes an iron-dependent sulfide transfer from a conserved cysteine residue of the protein to a thiazole intermediate. The enzyme can only undergo a single turnover, which suggests it is a suicide enzyme. May have additional roles in adaptation to various stress conditions and in DNA damage tolerance. In Physcomitrium patens (Spreading-leaved earth moss), this protein is Thiamine thiazole synthase 1, chloroplastic.